Consider the following 253-residue polypeptide: Flagellar brake protein YcgR (253 aa).

The PilZ domain occupies 120-239 (QRRDFYRFAT…NEGLINRYVY (120 aa)).

The protein belongs to the YcgR family. Monomer. Interacts with the flagellar basal bodies.

Its subcellular location is the bacterial flagellum basal body. In terms of biological role, acts as a flagellar brake, regulating swimming and swarming in a bis-(3'-5') cyclic diguanylic acid (c-di-GMP)-dependent manner. Binds 1 c-di-GMP dimer per subunit. Increasing levels of c-di-GMP lead to decreased motility. The polypeptide is Flagellar brake protein YcgR (Methylotenera mobilis (strain JLW8 / ATCC BAA-1282 / DSM 17540)).